We begin with the raw amino-acid sequence, 933 residues long: Isoleucine--tRNA ligase (933 aa).

The 'HIGH' region motif lies at 57–67; that stretch reads PYANGNIHVGH. Glu554 contacts L-isoleucyl-5'-AMP. The short motif at 595–599 is the 'KMSKS' region element; that stretch reads KMSKS. Lys598 serves as a coordination point for ATP.

Belongs to the class-I aminoacyl-tRNA synthetase family. IleS type 1 subfamily. In terms of assembly, monomer.

The protein localises to the cytoplasm. It catalyses the reaction tRNA(Ile) + L-isoleucine + ATP = L-isoleucyl-tRNA(Ile) + AMP + diphosphate. Functionally, catalyzes the attachment of isoleucine to tRNA(Ile). As IleRS can inadvertently accommodate and process structurally similar amino acids such as valine, to avoid such errors it has two additional distinct tRNA(Ile)-dependent editing activities. One activity is designated as 'pretransfer' editing and involves the hydrolysis of activated Val-AMP. The other activity is designated 'posttransfer' editing and involves deacylation of mischarged Val-tRNA(Ile). This Streptococcus pyogenes serotype M3 (strain ATCC BAA-595 / MGAS315) protein is Isoleucine--tRNA ligase.